The sequence spans 136 residues: Cell division protein SepF 3 (136 aa).

The protein belongs to the SepF family. As to quaternary structure, homodimer. Interacts with FtsZ.

It is found in the cytoplasm. Its function is as follows. Cell division protein that is part of the divisome complex and is recruited early to the Z-ring. Probably stimulates Z-ring formation, perhaps through the cross-linking of FtsZ protofilaments. Its function overlaps with FtsA. The sequence is that of Cell division protein SepF 3 from Streptomyces coelicolor (strain ATCC BAA-471 / A3(2) / M145).